The sequence spans 77 residues: Tachyplesin-1 (77 aa).

The first 23 residues, 1 to 23 (MKKLVIALCLMMVLAVMVEEAEA), serve as a signal peptide directing secretion. 2 disulfide bridges follow: cysteine 26-cysteine 39 and cysteine 30-cysteine 35. Position 40 is an arginine amide (arginine 40). Residues 41–77 (GKRNEVRQYRDRGYDVRAIPEETFFTRQDEDEDDDEE) constitute a propeptide that is removed on maturation.

It belongs to the tachyplesin/polyphemusin family. Hemocytes.

The protein resides in the secreted. In terms of biological role, significantly inhibits the growth of Gram-negative and Gram-positive bacteria. This is Tachyplesin-1 from Tachypleus tridentatus (Japanese horseshoe crab).